Consider the following 458-residue polypeptide: Adenylosuccinate synthetase (458 aa).

Residues 17–23 (GDEGKGK) and 45–47 (GHT) each bind GTP. Residue aspartate 18 is the Proton acceptor of the active site. Mg(2+) is bound by residues aspartate 18 and glycine 45. IMP contacts are provided by residues 18 to 21 (DEGK), 43 to 46 (NAGH), threonine 137, arginine 151, glutamine 247, threonine 262, and arginine 330. Histidine 46 serves as the catalytic Proton donor. 326–332 (VTTGRSR) contacts substrate. GTP-binding positions include arginine 332, 358-360 (KLD), and 440-442 (STG).

This sequence belongs to the adenylosuccinate synthetase family. In terms of assembly, homodimer. Mg(2+) is required as a cofactor.

It localises to the cytoplasm. The catalysed reaction is IMP + L-aspartate + GTP = N(6)-(1,2-dicarboxyethyl)-AMP + GDP + phosphate + 2 H(+). It functions in the pathway purine metabolism; AMP biosynthesis via de novo pathway; AMP from IMP: step 1/2. Plays an important role in the de novo pathway of purine nucleotide biosynthesis. Catalyzes the first committed step in the biosynthesis of AMP from IMP. In Albidiferax ferrireducens (strain ATCC BAA-621 / DSM 15236 / T118) (Rhodoferax ferrireducens), this protein is Adenylosuccinate synthetase.